A 214-amino-acid chain; its full sequence is Adenylate kinase (214 aa).

ATP is bound at residue 10–15 (GAGKGT). Residues 30–59 (STGDMFRDHKARGTEIGKQVQAIMDGGGLV) form an NMP region. AMP is bound by residues Thr31, Arg36, 57 to 59 (GLV), 85 to 88 (GYPR), and Gln92. The segment at 126–163 (GRRSCPRCGAVYHVSQNPPRRAGYCDRDDAELVQREDD) is LID. Arg127 contributes to the ATP binding site. Zn(2+) is bound by residues Cys130 and Cys133. 136-137 (VY) provides a ligand contact to ATP. Zn(2+)-binding residues include Cys150 and Asp153. AMP contacts are provided by Arg160 and Arg171. ATP is bound at residue Gly199.

This sequence belongs to the adenylate kinase family. In terms of assembly, monomer.

It localises to the cytoplasm. It catalyses the reaction AMP + ATP = 2 ADP. Its pathway is purine metabolism; AMP biosynthesis via salvage pathway; AMP from ADP: step 1/1. Functionally, catalyzes the reversible transfer of the terminal phosphate group between ATP and AMP. Plays an important role in cellular energy homeostasis and in adenine nucleotide metabolism. This chain is Adenylate kinase, found in Anaeromyxobacter dehalogenans (strain 2CP-C).